The sequence spans 1011 residues: Antigenic heat-stable 120 kDa protein (1011 aa).

3 disordered regions span residues 1–37 (DTSEFDPLANKEYTEEQKQTEEQEQKEFLSQTTTPAL), 54–73 (TPSMSALSGNISPDSQTSDP), and 348–396 (GQSK…PQSQ). A compositionally biased stretch (basic and acidic residues) spans 12–27 (EYTEEQKQTEEQEQKE). 2 stretches are compositionally biased toward polar residues: residues 348–373 (GQSKEQPLITPQQTTSSSVEPPQYKQ) and 380–396 (PTNQPLQPETSQMPQSQ).

Its subcellular location is the cytoplasm. In Rickettsia sibirica subsp. mongolitimonae (Rickettsia mongolotimonae), this protein is Antigenic heat-stable 120 kDa protein (sca4).